A 266-amino-acid polypeptide reads, in one-letter code: Thymidylate synthase (266 aa).

Arg-24 serves as a coordination point for dUMP. Residue His-54 participates in (6R)-5,10-methylene-5,6,7,8-tetrahydrofolate binding. A dUMP-binding site is contributed by 129–130; that stretch reads RR. Cys-149 serves as the catalytic Nucleophile. DUMP is bound by residues 169–172, Asn-180, and 210–212; these read RSAD and HIY. Asp-172 contributes to the (6R)-5,10-methylene-5,6,7,8-tetrahydrofolate binding site. Ala-265 provides a ligand contact to (6R)-5,10-methylene-5,6,7,8-tetrahydrofolate.

It belongs to the thymidylate synthase family. Bacterial-type ThyA subfamily. As to quaternary structure, homodimer.

Its subcellular location is the cytoplasm. It catalyses the reaction dUMP + (6R)-5,10-methylene-5,6,7,8-tetrahydrofolate = 7,8-dihydrofolate + dTMP. The protein operates within pyrimidine metabolism; dTTP biosynthesis. Functionally, catalyzes the reductive methylation of 2'-deoxyuridine-5'-monophosphate (dUMP) to 2'-deoxythymidine-5'-monophosphate (dTMP) while utilizing 5,10-methylenetetrahydrofolate (mTHF) as the methyl donor and reductant in the reaction, yielding dihydrofolate (DHF) as a by-product. This enzymatic reaction provides an intracellular de novo source of dTMP, an essential precursor for DNA biosynthesis. The sequence is that of Thymidylate synthase from Nocardia farcinica (strain IFM 10152).